The chain runs to 432 residues: Transcriptional adapter 3 (432 aa).

Residue Lys21 forms a Glycyl lysine isopeptide (Lys-Gly) (interchain with G-Cter in SUMO2) linkage. The stretch at 40 to 69 (IEELDTLQLELETLLSSASRRLRVLEAETQ) forms a coiled coil. Residues 87-127 (GRDHELGAPPKHGKPKKQKLEGKAGHGPGPGPGRPKSKNLQ) form a disordered region. A Glycyl lysine isopeptide (Lys-Gly) (interchain with G-Cter in SUMO2) cross-link involves residue Lys129. Basic and acidic residues-rich tracts occupy residues 211–223 (DGAR…DKKK) and 232–251 (LDTK…HEQP). Disordered stretches follow at residues 211 to 257 (DGAR…GCPF) and 271 to 319 (ENII…SRIK). Ser280 and Ser298 each carry phosphoserine. Residues 295 to 305 (ASTSPRNQNKP) are compositionally biased toward polar residues. The stretch at 367–407 (LLRLAKEEVSRQELRQRVRMADNEVMDAFRKIMAARQKKRT) forms a coiled coil. Position 418 is an N6-acetyllysine (Lys418).

This sequence belongs to the NGG1 family. In terms of assembly, the PCAF complex is composed of a number of TBP-associated factors (TAFS), such as TAF5, TAF5L, TAF6, TAF6L, TAF9, TAF10 and TAF12, PCAF, and also PCAF-associated factors (PAFs), such as TADA2L/ADA2, TADA3L/ADA3 and SPT3. Interacts directly with TADA2L and PCAF and also with the high-risk HPV oncoprotein E6. Component of the STAGA transcription coactivator-HAT complex, at least composed of SUPT3H, GCN5L2, TAF5L, TAF6L, SUPT7L, TADA3L, TAD1L, TAF10, TAF12, TRRAP and TAF9. Component of the TFTC-HAT complex. Component of the ADA2A-containing complex (ATAC), composed of KAT14, KAT2A, TADA2L, TADA3L, ZZ3, MBIP, WDR5, YEATS2, CCDC101 and DR1.

Its subcellular location is the nucleus. Functionally, functions as a component of the PCAF complex. The PCAF complex is capable of efficiently acetylating histones in a nucleosomal context. The PCAF complex could be considered as the human version of the yeast SAGA complex. Also known as a coactivator for p53/TP53-dependent transcriptional activation. Component of the ATAC complex, a complex with histone acetyltransferase activity on histones H3 and H4. This Pongo abelii (Sumatran orangutan) protein is Transcriptional adapter 3 (TADA3).